Reading from the N-terminus, the 217-residue chain is 3,4-dihydroxy-2-butanone 4-phosphate synthase (217 aa).

D-ribulose 5-phosphate-binding positions include 37 to 38, D42, 150 to 154, and E174; these read RE and RGGHT. E38 serves as a coordination point for Mg(2+). H153 contributes to the Mg(2+) binding site.

The protein belongs to the DHBP synthase family. In terms of assembly, homodimer. Mg(2+) is required as a cofactor. Requires Mn(2+) as cofactor.

It carries out the reaction D-ribulose 5-phosphate = (2S)-2-hydroxy-3-oxobutyl phosphate + formate + H(+). It participates in cofactor biosynthesis; riboflavin biosynthesis; 2-hydroxy-3-oxobutyl phosphate from D-ribulose 5-phosphate: step 1/1. In terms of biological role, catalyzes the conversion of D-ribulose 5-phosphate to formate and 3,4-dihydroxy-2-butanone 4-phosphate. This Salmonella heidelberg (strain SL476) protein is 3,4-dihydroxy-2-butanone 4-phosphate synthase.